We begin with the raw amino-acid sequence, 326 residues long: F-box/LRR-repeat protein 12 (326 aa).

Positions 1–47 (MATLFDLPDLVLLEIFSYLPVRDRIRISRVCHRWKRLVDDRWLWRHV) constitute an F-box domain. 8 LRR repeats span residues 51-78 (LYTM…RMGG), 86-111 (APQL…CLHV), 113-133 (DLSM…ELHS), 161-185 (VPAF…VLGG), 186-211 (TYRV…EVLG), 212-236 (CTLS…IRLT), 237-261 (VGGL…CFQG), and 266-291 (PDMP…EVQG).

In terms of assembly, interacts with SKP1 and CUL1.

It functions in the pathway protein modification; protein ubiquitination. In terms of biological role, substrate-recognition component of the SCF (SKP1-CUL1-F-box protein)-type E3 ubiquitin ligase complex. Mediates the polyubiquitination and proteasomal degradation of CAMK1 leading to disruption of cyclin D1/CDK4 complex assembly which results in G1 cell cycle arrest in lung epithelia. In Mus musculus (Mouse), this protein is F-box/LRR-repeat protein 12 (Fbxl12).